A 224-amino-acid polypeptide reads, in one-letter code: ATP phosphoribosyltransferase (224 aa).

The protein belongs to the ATP phosphoribosyltransferase family. Short subfamily. As to quaternary structure, heteromultimer composed of HisG and HisZ subunits.

It localises to the cytoplasm. It catalyses the reaction 1-(5-phospho-beta-D-ribosyl)-ATP + diphosphate = 5-phospho-alpha-D-ribose 1-diphosphate + ATP. It participates in amino-acid biosynthesis; L-histidine biosynthesis; L-histidine from 5-phospho-alpha-D-ribose 1-diphosphate: step 1/9. Functionally, catalyzes the condensation of ATP and 5-phosphoribose 1-diphosphate to form N'-(5'-phosphoribosyl)-ATP (PR-ATP). Has a crucial role in the pathway because the rate of histidine biosynthesis seems to be controlled primarily by regulation of HisG enzymatic activity. This is ATP phosphoribosyltransferase from Cupriavidus metallidurans (strain ATCC 43123 / DSM 2839 / NBRC 102507 / CH34) (Ralstonia metallidurans).